Here is a 159-residue protein sequence, read N- to C-terminus: NADH-quinone oxidoreductase subunit I (159 aa).

2 4Fe-4S ferredoxin-type domains span residues 51-80 (RRYE…IEAE) and 90-119 (TRYD…EGPN). [4Fe-4S] cluster is bound by residues Cys60, Cys63, Cys66, Cys70, Cys99, Cys102, Cys105, and Cys109.

Belongs to the complex I 23 kDa subunit family. NDH-1 is composed of 14 different subunits. Subunits NuoA, H, J, K, L, M, N constitute the membrane sector of the complex. Requires [4Fe-4S] cluster as cofactor.

It localises to the cell inner membrane. It carries out the reaction a quinone + NADH + 5 H(+)(in) = a quinol + NAD(+) + 4 H(+)(out). NDH-1 shuttles electrons from NADH, via FMN and iron-sulfur (Fe-S) centers, to quinones in the respiratory chain. The immediate electron acceptor for the enzyme in this species is believed to be ubiquinone. Couples the redox reaction to proton translocation (for every two electrons transferred, four hydrogen ions are translocated across the cytoplasmic membrane), and thus conserves the redox energy in a proton gradient. This is NADH-quinone oxidoreductase subunit I from Rickettsia canadensis (strain McKiel).